The chain runs to 263 residues: Small ribosomal subunit protein uS2 (263 aa).

The disordered stretch occupies residues 223–246 (KSLLEQDSDANADEAEVSQEEKDA). A compositionally biased stretch (acidic residues) spans 228–240 (QDSDANADEAEVS).

It belongs to the universal ribosomal protein uS2 family.

This Campylobacter curvus (strain 525.92) protein is Small ribosomal subunit protein uS2.